The chain runs to 479 residues: UDP-N-acetylmuramate--L-alanine ligase (479 aa).

115-121 (GTHGKTT) lines the ATP pocket.

This sequence belongs to the MurCDEF family.

The protein localises to the cytoplasm. The catalysed reaction is UDP-N-acetyl-alpha-D-muramate + L-alanine + ATP = UDP-N-acetyl-alpha-D-muramoyl-L-alanine + ADP + phosphate + H(+). Its pathway is cell wall biogenesis; peptidoglycan biosynthesis. Its function is as follows. Cell wall formation. The sequence is that of UDP-N-acetylmuramate--L-alanine ligase from Acidiphilium cryptum (strain JF-5).